A 78-amino-acid chain; its full sequence is Broad mercury transporter MerE (78 aa).

A run of 2 helical transmembrane segments spans residues 19-39 (LWGALAVLTCPCHLPILAAVL) and 47-67 (FLGEHWGVAALALTGLFVLAV).

It localises to the cell inner membrane. Functionally, broad mercury transporter that mediates the transport of both CH(3)Hg(I) and Hg(II) across the membrane. This Shigella flexneri protein is Broad mercury transporter MerE.